A 101-amino-acid chain; its full sequence is MEYIYAAMLLHTTGKEINEENVKSVLEAAGAEVDDARVKALIAALEDVDIEEAMETTAVAAAPAAAAAPAAAEEAEEEAEEEEEEEEAEEEAAAGLGALFG.

A compositionally biased stretch (low complexity) spans 61–72 (AAPAAAAAPAAA). Residues 61-101 (AAPAAAAAPAAAEEAEEEAEEEEEEEEAEEEAAAGLGALFG) form a disordered region. A compositionally biased stretch (acidic residues) spans 73–92 (EEAEEEAEEEEEEEEAEEEA).

Belongs to the eukaryotic ribosomal protein P1/P2 family. In terms of assembly, part of the 50S ribosomal subunit. Homodimer, it forms part of the ribosomal stalk which helps the ribosome interact with GTP-bound translation factors. Forms a heptameric uL10/P0(P1)2(P1)2(P1)2 complex, where uL10/P0 forms an elongated spine to which the P1 dimers bind in a sequential fashion.

Forms part of the ribosomal stalk, playing a central role in the interaction of the ribosome with GTP-bound translation factors. The sequence is that of Large ribosomal subunit protein P1 from Methanothermobacter thermautotrophicus (strain ATCC 29096 / DSM 1053 / JCM 10044 / NBRC 100330 / Delta H) (Methanobacterium thermoautotrophicum).